Reading from the N-terminus, the 170-residue chain is Cathelicidin antimicrobial peptide (170 aa).

The first 30 residues, Met-1–Ala-30, serve as a signal peptide directing secretion. Residues Gln-31–Lys-131 constitute a propeptide, cathelin-like domain (CLD). Intrachain disulfides connect Cys-86–Cys-97 and Cys-108–Cys-125. Residues Leu-150 to Gly-162 are active core.

This sequence belongs to the cathelicidin family. As to quaternary structure, monomer, homodimer or homotrimer (in vitro). Oligomerizes as tetra- or hexamer in solution (in vitro). Post-translationally, proteolytically cleaved by proteinase PRTN3 into antibacterial peptide LL-37. Proteolytically cleaved by cathepsin CTSG and neutrophil elastase ELANE. In terms of processing, resistant to proteolytic degradation in solution, and when bound to both zwitterionic (mimicking mammalian membranes) and negatively charged membranes (mimicking bacterial membranes). After secretion onto the skin surface, the CAMP gene product is processed by a serine protease-dependent mechanism into multiple novel antimicrobial peptides distinct from and shorter than cathelicidin LL-37. These peptides show enhanced antimicrobial action, acquiring the ability to kill skin pathogens such as S.aureus, E.coli and C.albicans. These peptides have lost the ability to stimulate CXCL8/IL8 release from keratinocytes. The peptides act synergistically, killing bacteria at lower concentrations when present together, and maintain activity at increased salt condition.

The protein localises to the secreted. It is found in the vesicle. Functionally, antimicrobial protein that is an integral component of the innate immune system. Binds to bacterial lipopolysaccharides (LPS). Acts via neutrophil N-formyl peptide receptors to enhance the release of CXCL2. Postsecretory processing generates multiple cathelicidin antimicrobial peptides with various lengths which act as a topical antimicrobial defense in sweat on skin. The unprocessed precursor form, cathelicidin antimicrobial peptide, inhibits the growth of Gram-negative E.coli and E.aerogenes with efficiencies comparable to that of the mature peptide LL-37 (in vitro). Its function is as follows. Antimicrobial peptide that is an integral component of the innate immune system. Binds to bacterial lipopolysaccharides (LPS). Causes membrane permeabilization by forming transmembrane pores (in vitro). Causes lysis of E.coli. Exhibits antimicrobial activity against Gram-negative bacteria such as P.aeruginosa, S.typhimurium, E.aerogenes, E.coli and P.syringae, Gram-positive bacteria such as L.monocytogenes, S.epidermidis, S.pyogenes and S.aureus, as well as vancomycin-resistant enterococci (in vitro). Exhibits antimicrobial activity against methicillin-resistant S.aureus, P.mirabilis, and C.albicans in low-salt media, but not in media containing 100 mM NaCl (in vitro). Forms chiral supramolecular assemblies with quinolone signal (PQS) molecules of P.aeruginosa, which may lead to interference of bacterial quorum signaling and perturbance of bacterial biofilm formation. May form supramolecular fiber-like assemblies on bacterial membranes. Induces cytokine and chemokine producation as well as TNF/TNFA and CSF2/GMCSF production in normal human keratinocytes. Exhibits hemolytic activity against red blood cells. In terms of biological role, exhibits antimicrobial activity against E.coli and B.megaterium (in vitro). The polypeptide is Cathelicidin antimicrobial peptide (Ateles fusciceps (Brown-headed spider monkey)).